The primary structure comprises 372 residues: uncharacterized protein (372 aa).

The N-terminal stretch at 1-33 is a signal peptide; the sequence is MVRRALRLAAGTASLAAGTWLLRALHGTPAALG.

The protein to K.pneumoniae RomA.

This is an uncharacterized protein from Mycobacterium bovis (strain ATCC BAA-935 / AF2122/97).